Here is a 152-residue protein sequence, read N- to C-terminus: Arginine repressor (152 aa).

Belongs to the ArgR family.

The protein localises to the cytoplasm. It participates in amino-acid biosynthesis; L-arginine biosynthesis [regulation]. In terms of biological role, regulates arginine biosynthesis genes. The polypeptide is Arginine repressor (Caldicellulosiruptor saccharolyticus (strain ATCC 43494 / DSM 8903 / Tp8T 6331)).